The sequence spans 385 residues: 2-oxoglutarate-dependent dioxygenase AFUA_1G01000 (385 aa).

In terms of domain architecture, Fe2OG dioxygenase spans 203 to 327 (PSDDFLRLLR…RYSVLVGTRP (125 aa)). Residues His-230, Asp-232, and His-304 each contribute to the Fe cation site. Residue Arg-318 coordinates 2-oxoglutarate.

The protein belongs to the iron/ascorbate-dependent oxidoreductase family. Requires Fe(2+) as cofactor.

2-oxoglutarate-dependent dioxygenase; part of the gene cluster that mediates the biosynthesis of fumigermin that inhibits germination of spores of the inducing S.rapamycinicus, and thus helps the fungus to defend resources in the shared habitat against a bacterial competitor. The partially reducing polyketide synthase fngA alone is sufficient for the production of fumigermin. FgnA catalyzes the condensation of 3 malonyl-CoA units to an acetyl-CoA starter, and 3 methylations to yield fumigermin. It is remarkable that the five cluster genes including fgnA are conserved in distantly related fungi, supporting the assumption of a fumigermin cluster; it is thus possible that originally all five genes were functional, but that the genes encoding tailoring enzymes became inactive from mutations, similar to the case of the fgnA gene in strains A1163 and Af293. This chain is 2-oxoglutarate-dependent dioxygenase AFUA_1G01000, found in Aspergillus fumigatus (strain ATCC MYA-4609 / CBS 101355 / FGSC A1100 / Af293) (Neosartorya fumigata).